Here is a 647-residue protein sequence, read N- to C-terminus: DNA mismatch repair protein MutL (647 aa).

A disordered region spans residues 389-423 (SESSVSSVANKQQPTVKQAKRSADDSDSEHGKLDY). Basic and acidic residues predominate over residues 409–423 (RSADDSDSEHGKLDY).

The protein belongs to the DNA mismatch repair MutL/HexB family.

In terms of biological role, this protein is involved in the repair of mismatches in DNA. It is required for dam-dependent methyl-directed DNA mismatch repair. May act as a 'molecular matchmaker', a protein that promotes the formation of a stable complex between two or more DNA-binding proteins in an ATP-dependent manner without itself being part of a final effector complex. In Streptococcus thermophilus (strain ATCC BAA-491 / LMD-9), this protein is DNA mismatch repair protein MutL.